The chain runs to 415 residues: 3-isopropylmalate dehydratase large subunit (415 aa).

Residues Cys-297, Cys-355, and Cys-358 each coordinate [4Fe-4S] cluster.

It belongs to the aconitase/IPM isomerase family. LeuC type 2 subfamily. As to quaternary structure, heterodimer of LeuC and LeuD. The cofactor is [4Fe-4S] cluster.

It catalyses the reaction (2R,3S)-3-isopropylmalate = (2S)-2-isopropylmalate. The protein operates within amino-acid biosynthesis; L-leucine biosynthesis; L-leucine from 3-methyl-2-oxobutanoate: step 2/4. Functionally, catalyzes the isomerization between 2-isopropylmalate and 3-isopropylmalate, via the formation of 2-isopropylmaleate. This chain is 3-isopropylmalate dehydratase large subunit, found in Metallosphaera sedula (strain ATCC 51363 / DSM 5348 / JCM 9185 / NBRC 15509 / TH2).